Here is a 149-residue protein sequence, read N- to C-terminus: Urease accessory protein UreE (149 aa).

This sequence belongs to the UreE family.

The protein localises to the cytoplasm. Involved in urease metallocenter assembly. Binds nickel. Probably functions as a nickel donor during metallocenter assembly. This is Urease accessory protein UreE from Prochlorococcus marinus (strain AS9601).